Consider the following 354-residue polypeptide: Polyribonucleotide 5'-hydroxyl-kinase PYRAB01840 (354 aa).

Residue 36 to 43 (GDVDTGKT) coordinates ATP.

Requires a divalent metal cation as cofactor.

The catalysed reaction is a 5'-end dephospho-2'-deoxyribonucleoside-DNA + ATP = a 5'-end 5'-phospho-2'-deoxyribonucleoside-DNA + ADP + H(+). It carries out the reaction a 5'-end dephospho-ribonucleoside-RNA + ATP = a 5'-end 5'-phospho-ribonucleoside-RNA + ADP + H(+). Its function is as follows. Polynucleotide kinase that can phosphorylate the 5'-hydroxyl groups of both single-stranded RNA (ssRNA) and single-stranded DNA (ssDNA). Exhibits a strong preference for ssRNA. This chain is Polyribonucleotide 5'-hydroxyl-kinase PYRAB01840, found in Pyrococcus abyssi (strain GE5 / Orsay).